The following is a 219-amino-acid chain: MSTIQLEAQSRTDMGKGASRRLRRLENKVPAVIYGGSKKPMAIHFSHNKVIKALETESIYSSVFDITVDGKVEHVILKALQRHPYKPIVLHMDLQRVSSKDILVKLVPVHFINEEQSPGIKAGGIVQHTMTQVEIRCQAKDLPEFIEVDMSKVGMDDVVHLSDLKLPKGVQLTVDVADGSHDAPVVSIHAAKVSSTELEETPEVPASAVPTTDQGESAE.

Residues 194-219 (SSTELEETPEVPASAVPTTDQGESAE) form a disordered region. Residues 209-219 (VPTTDQGESAE) show a composition bias toward polar residues.

Belongs to the bacterial ribosomal protein bL25 family. CTC subfamily. Part of the 50S ribosomal subunit; part of the 5S rRNA/L5/L18/L25 subcomplex. Contacts the 5S rRNA. Binds to the 5S rRNA independently of L5 and L18.

Its function is as follows. This is one of the proteins that binds to the 5S RNA in the ribosome where it forms part of the central protuberance. This is Large ribosomal subunit protein bL25 from Legionella pneumophila (strain Paris).